Consider the following 205-residue polypeptide: Protein N-terminal glutamine amidohydrolase (205 aa).

Active-site residues include C20, H74, and D90.

Belongs to the NTAQ1 family. Monomer.

The enzyme catalyses N-terminal L-glutaminyl-[protein] + H2O = N-terminal L-glutamyl-[protein] + NH4(+). In terms of biological role, mediates the side-chain deamidation of N-terminal glutamine residues to glutamate, an important step in N-end rule pathway of protein degradation. Conversion of the resulting N-terminal glutamine to glutamate renders the protein susceptible to arginylation, polyubiquitination and degradation as specified by the N-end rule. Does not act on substrates with internal or C-terminal glutamine and does not act on non-glutamine residues in any position. In Drosophila willistoni (Fruit fly), this protein is Protein N-terminal glutamine amidohydrolase (tun).